The following is a 164-amino-acid chain: 6,7-dimethyl-8-ribityllumazine synthase (164 aa).

Residues Phe24, 58-60 (ALE), and 82-84 (AVI) contribute to the 5-amino-6-(D-ribitylamino)uracil site. (2S)-2-hydroxy-3-oxobutyl phosphate is bound at residue 87-88 (ET). His90 acts as the Proton donor in catalysis. Asn115 contributes to the 5-amino-6-(D-ribitylamino)uracil binding site. Arg129 serves as a coordination point for (2S)-2-hydroxy-3-oxobutyl phosphate.

The protein belongs to the DMRL synthase family.

The enzyme catalyses (2S)-2-hydroxy-3-oxobutyl phosphate + 5-amino-6-(D-ribitylamino)uracil = 6,7-dimethyl-8-(1-D-ribityl)lumazine + phosphate + 2 H2O + H(+). It participates in cofactor biosynthesis; riboflavin biosynthesis; riboflavin from 2-hydroxy-3-oxobutyl phosphate and 5-amino-6-(D-ribitylamino)uracil: step 1/2. Functionally, catalyzes the formation of 6,7-dimethyl-8-ribityllumazine by condensation of 5-amino-6-(D-ribitylamino)uracil with 3,4-dihydroxy-2-butanone 4-phosphate. This is the penultimate step in the biosynthesis of riboflavin. The polypeptide is 6,7-dimethyl-8-ribityllumazine synthase (Ralstonia nicotianae (strain ATCC BAA-1114 / GMI1000) (Ralstonia solanacearum)).